We begin with the raw amino-acid sequence, 360 residues long: MSKVFNFSAGPAMMPEAVLAQAQAELLNWQEQQTSVMEVSHRGKLFMALASQSELDLRQLYQIPDNYRILFLQGGARGQFAAIPMNLLKEKGKALYLTSGHWSATAAKEARLFGDIDEVNILEEGNELKIGQLDFSHIADQYDYVHYCPNETISGVEIFDLPKVGNAVLVADMSSNILSRKIDISQFGLIYAGAQKNLGPAGITLVIVREDLIGHARQTTPTIWNYEIQSKADSMINTPPTFAWYLCALVFKHLLSLGGIEEIEKRNQAKAQLLYDYLESTPFYRNPVAKVNRSRMNVTFTTDNDELNAKFVAEATAAGLHALKGHKVLGGMRASIYNAMPMEGVQALIAFMKQFEAENR.

Residue Arg42 coordinates L-glutamate. Residues 76–77, Trp102, Thr152, Asp172, and Gln195 contribute to the pyridoxal 5'-phosphate site; that span reads AR. Position 196 is an N6-(pyridoxal phosphate)lysine (Lys196). 237-238 contributes to the pyridoxal 5'-phosphate binding site; sequence NT.

The protein belongs to the class-V pyridoxal-phosphate-dependent aminotransferase family. SerC subfamily. In terms of assembly, homodimer. Pyridoxal 5'-phosphate is required as a cofactor.

The protein localises to the cytoplasm. It catalyses the reaction O-phospho-L-serine + 2-oxoglutarate = 3-phosphooxypyruvate + L-glutamate. The catalysed reaction is 4-(phosphooxy)-L-threonine + 2-oxoglutarate = (R)-3-hydroxy-2-oxo-4-phosphooxybutanoate + L-glutamate. The protein operates within amino-acid biosynthesis; L-serine biosynthesis; L-serine from 3-phospho-D-glycerate: step 2/3. Its pathway is cofactor biosynthesis; pyridoxine 5'-phosphate biosynthesis; pyridoxine 5'-phosphate from D-erythrose 4-phosphate: step 3/5. Functionally, catalyzes the reversible conversion of 3-phosphohydroxypyruvate to phosphoserine and of 3-hydroxy-2-oxo-4-phosphonooxybutanoate to phosphohydroxythreonine. The polypeptide is Phosphoserine aminotransferase (Pasteurella multocida (strain Pm70)).